A 126-amino-acid polypeptide reads, in one-letter code: Large ribosomal subunit protein bL19 (126 aa).

It belongs to the bacterial ribosomal protein bL19 family.

Its function is as follows. This protein is located at the 30S-50S ribosomal subunit interface and may play a role in the structure and function of the aminoacyl-tRNA binding site. The polypeptide is Large ribosomal subunit protein bL19 (Prochlorococcus marinus (strain MIT 9312)).